The primary structure comprises 762 residues: Anhydrosialidase (762 aa).

The N-terminal stretch at 1–27 (MGRIGKKAMAIALVSAVMVTPLNVCAT) is a signal peptide. Residue Arg293 participates in substrate binding. Asp318 functions as the Proton acceptor in the catalytic mechanism. BNR repeat units lie at residues 328–339 (AKSTDGGNTWSE), 511–522 (RYSDDEGASWSD), and 571–582 (MYSDDHGDNWTY). Glu595 is a catalytic residue. Residue Arg611 coordinates substrate. The stretch at 620 to 631 (VTSIDGGETWSD) is one BNR 4 repeat. Residue Arg673 coordinates substrate. Residue Tyr713 is the Nucleophile of the active site.

This sequence belongs to the glycosyl hydrolase 33 family.

It is found in the secreted. Its subcellular location is the extracellular space. It catalyses the reaction Elimination of alpha-sialyl groups in N-acetylneuraminic acid glycosides, releasing 2,7-anhydro-alpha-N-acetylneuraminate.. This is Anhydrosialidase from Macrobdella decora (North American leech).